The following is a 144-amino-acid chain: Large ribosomal subunit protein bL31c (144 aa).

A chloroplast-targeting transit peptide spans 1 to 48 (MAVSLPNSFLQISPCVPSLQLRKPVMAAVKGGKQSVRRSSNTVVQITC).

The protein belongs to the bacterial ribosomal protein bL31 family. Type A subfamily. As to quaternary structure, part of the 50S ribosomal subunit.

The protein localises to the plastid. It is found in the chloroplast. Binds the 23S rRNA. This is Large ribosomal subunit protein bL31c (RPL31) from Arabidopsis thaliana (Mouse-ear cress).